The sequence spans 93 residues: RNA-binding protein Hfq (93 aa).

The Sm domain occupies 11–71 (DVFLNHVRKS…ISTVMPGAPI (61 aa)).

This sequence belongs to the Hfq family. Homohexamer.

Functionally, RNA chaperone that binds small regulatory RNA (sRNAs) and mRNAs to facilitate mRNA translational regulation in response to envelope stress, environmental stress and changes in metabolite concentrations. Also binds with high specificity to tRNAs. The protein is RNA-binding protein Hfq of Granulibacter bethesdensis (strain ATCC BAA-1260 / CGDNIH1).